The sequence spans 838 residues: Calmodulin-binding transcription activator 6 (838 aa).

Positions 25-134 (VQTMLEEAKS…YRDTQEAATT (110 aa)) form a DNA-binding region, CG-1. An ANK repeat occupies 525–554 (QGWTALHWAAYYGREKMVAALLSAGARPNL). 3 consecutive IQ domains span residues 671–700 (SIIAAMKIQNAFRKYDTRRKIEAAYRIQCR), 713–742 (MRRQAIRIQAAFRGLQARRQYKKILWSVGV), and 788–817 (LERSVVRVQAMFRSKKAQQDYRRMKLTHEE). A calmodulin-binding region spans residues 738-760 (WSVGVLEKAVLRWRQKRKGFRGL). Positions 802-822 (KKAQQDYRRMKLTHEEAQVNH) form a coiled coil.

It belongs to the CAMTA family. Expressed in roots, stems, leaves, sepals, petals, stamen filaments, top of carpels, anthers and siliques, but not in stigmas.

It is found in the nucleus. In terms of biological role, transcription activator that binds calmodulin in a calcium-dependent manner in vitro. Binds to the DNA consensus sequence 5'-[ACG]CGCG[GTC]-3'. Regulates transcriptional activity in response to calcium signals. The chain is Calmodulin-binding transcription activator 6 from Arabidopsis thaliana (Mouse-ear cress).